Consider the following 731-residue polypeptide: Elongation factor 2 (731 aa).

The tr-type G domain occupies E19–K234. Residues A28–T35, D94–H98, and N148–D151 each bind GTP. Residue H598 is modified to Diphthamide.

It belongs to the TRAFAC class translation factor GTPase superfamily. Classic translation factor GTPase family. EF-G/EF-2 subfamily.

The protein resides in the cytoplasm. Its function is as follows. Catalyzes the GTP-dependent ribosomal translocation step during translation elongation. During this step, the ribosome changes from the pre-translocational (PRE) to the post-translocational (POST) state as the newly formed A-site-bound peptidyl-tRNA and P-site-bound deacylated tRNA move to the P and E sites, respectively. Catalyzes the coordinated movement of the two tRNA molecules, the mRNA and conformational changes in the ribosome. The polypeptide is Elongation factor 2 (Methanobrevibacter ruminantium (strain ATCC 35063 / DSM 1093 / JCM 13430 / OCM 146 / M1) (Methanobacterium ruminantium)).